The following is a 513-amino-acid chain: Coniferin beta-glucosidase (513 aa).

The first 23 residues, 1-23 (MEVSVLMWVLLFYSLLGFQVTTA), serve as a signal peptide directing secretion. A beta-D-glucoside is bound by residues Q44, H145, and 190–191 (NE). Catalysis depends on E191, which acts as the Proton donor. C210 and C219 are oxidised to a cystine. Residue N223 is glycosylated (N-linked (GlcNAc...) asparagine). The a beta-D-glucoside site is built by Y336 and E408. E408 functions as the Nucleophile in the catalytic mechanism. N447 carries an N-linked (GlcNAc...) asparagine glycan. Residues W457, 464-465 (EW), and F473 each bind a beta-D-glucoside.

The protein belongs to the glycosyl hydrolase 1 family. Homodimer. Glycosylated.

The enzyme catalyses 4-O-(beta-D-glucosyl)-(E)-coniferol + H2O = (E)-coniferol + D-glucose. Its activity is regulated as follows. Inhibited by glucono-1,5-lactone, but not by bromoconduritol or conduritol B epoxide. Its function is as follows. Involved in the release of monolignols for lignin biosynthesis. Unable to hydrolyze 4-nitrophenyl beta-cellobioside or alpha-linked methylumbelliferyl glucoside. This Pinus contorta (Shore pine) protein is Coniferin beta-glucosidase.